Here is a 299-residue protein sequence, read N- to C-terminus: Exosome complex component rrp42 (299 aa).

Belongs to the RNase PH family. Component of the RNA exosome complex. Specifically part of the catalytically inactive RNA exosome core complex (Exo-9) which may associate with the catalytic subunits rrp6 and dis3 in cytoplasmic- and nuclear-specific RNA exosome complex forms. Exo-9 is formed by a hexameric base ring of RNase PH domain-containing subunits and a cap ring consisting of csl4, rrp4 and rrp40.

The protein localises to the cytoplasm. It localises to the nucleus. The protein resides in the nucleolus. Functionally, non-catalytic component of the RNA exosome complex which has 3'-&gt;5' exoribonuclease activity and participates in a multitude of cellular RNA processing and degradation events. In the nucleus, the RNA exosome complex is involved in proper maturation of stable RNA species such as rRNA, snRNA and snoRNA, in the elimination of RNA processing by-products and non-coding 'pervasive' transcripts, such as antisense RNA species and cryptic unstable transcripts (CUTs), and of mRNAs with processing defects, thereby limiting or excluding their export to the cytoplasm. In the cytoplasm, the RNA exosome complex is involved in general mRNA turnover and in RNA surveillance pathways, preventing translation of aberrant mRNAs. The catalytic inactive RNA exosome core complex of 9 subunits (Exo-9) is proposed to play a pivotal role in the binding and presentation of RNA for ribonucleolysis, and to serve as a scaffold for the association with catalytic subunits and accessory proteins or complexes. ski6 is part of the hexameric ring of RNase PH domain-containing subunits proposed to form a central channel which threads RNA substrates for degradation. The chain is Exosome complex component rrp42 (rrp42) from Schizosaccharomyces pombe (strain 972 / ATCC 24843) (Fission yeast).